The sequence spans 58 residues: Potassium channel toxin alpha-KTx 16.6 (58 aa).

The signal sequence occupies residues 1 to 22 (MKILSVLLIALIICSINICSEA). Intrachain disulfides connect C29–C50, C35–C55, and C39–C57.

This sequence belongs to the short scorpion toxin superfamily. Potassium channel inhibitor family. Alpha-KTx 16 subfamily. Expressed by the venom gland.

The protein localises to the secreted. Its function is as follows. Inhibits potassium channel. The chain is Potassium channel toxin alpha-KTx 16.6 from Buthus israelis (Israeli scorpion).